We begin with the raw amino-acid sequence, 205 residues long: Bcl2-associated agonist of cell death (205 aa).

Positions 1 to 139 (MGTPKQPSLA…PFRGRSRSAP (139 aa)) are disordered. Ser67 carries the phosphoserine modification. A compositionally biased stretch (polar residues) spans 85-98 (IVQQQPGQAANNSH). Ser113 is modified (phosphoserine). Residues 118–128 (TEEDEGMEEEL) show a composition bias toward acidic residues. Ser129 carries the post-translational modification Phosphoserine. Asymmetric dimethylarginine; by PRMT1 occurs at positions 132 and 134. Ser135 carries the post-translational modification Phosphoserine. Residue Ser137 is modified to Phosphoserine; by PKA, PKB, PAK1, RPS6KA1, RPS6KB1 and PKC/PRKCQ. The short motif at 148 to 162 (YGRELRRMSDEFEGS) is the BH3 element. Residues Ser156 and Ser171 each carry the phosphoserine modification. Residues 161–180 (GSFKGLPRPKSAGTATQMRQ) are disordered.

Belongs to the Bcl-2 family. In terms of assembly, forms heterodimers with the anti-apoptotic proteins, Bcl-X(L), Bcl-2 and Bcl-W. Also binds protein S100A10. The Ser-113/Ser-137 phosphorylated form binds 14-3-3 proteins. Interacts with AKT1 and PIM3. Interacts with HIF3A (via C-terminus domain); the interaction reduces the binding between BAD and BAX. Interacts (via BH3 domain) with NOL3 (via CARD domain); preventing the association of BAD with BCL2. Interacts with GIMAP3/IAN4 and GIMAP5/IAN5. Post-translationally, phosphorylated at one or more of Ser-113, Ser-137, Ser-156 and Ser-171 in response to survival stimuli, which blocks its pro-apoptotic activity. Phosphorylation on Ser-137 or Ser-113 promotes heterodimerization with 14-3-3 proteins. This interaction then facilitates the phosphorylation at Ser-156, a site within the BH3 motif, leading to the release of Bcl-X(L) and the promotion of cell survival. Ser-137 is the major site of AKT/PKB phosphorylation, Ser-156 the major site of protein kinase A (CAPK) phosphorylation. In terms of processing, methylation at Arg-132 and Arg-134 by PRMT1 inhibits Akt-mediated phosphorylation at Ser-137. In terms of tissue distribution, expressed in all tissues tested, including brain, liver, spleen and heart. In the brain, restricted to epithelial cells of the choroid plexus. Isoform alpha is the more abundant form.

It is found in the mitochondrion outer membrane. Its subcellular location is the cytoplasm. In terms of biological role, promotes cell death. Successfully competes for the binding to Bcl-X(L), Bcl-2 and Bcl-W, thereby affecting the level of heterodimerization of these proteins with BAX. Can reverse the death repressor activity of Bcl-X(L), but not that of Bcl-2. Appears to act as a link between growth factor receptor signaling and the apoptotic pathways. In Rattus norvegicus (Rat), this protein is Bcl2-associated agonist of cell death (Bad).